A 388-amino-acid chain; its full sequence is Integrase (388 aa).

The Core-binding (CB) domain maps to tyrosine 70–methionine 151. A Tyr recombinase domain is found at arginine 173–aspartate 379. Active-site residues include arginine 208, lysine 249, arginine 330, and histidine 353. Tyrosine 363 (O-(3'-phospho-DNA)-tyrosine intermediate) is an active-site residue.

The protein belongs to the 'phage' integrase family.

In terms of biological role, required for integration of pSAM2. This chain is Integrase (int), found in Streptomyces ambofaciens.